The primary structure comprises 181 residues: Nucleoside-triphosphatase THEP1 (181 aa).

ATP-binding positions include 12 to 19 (GPVGSIKS) and 104 to 111 (VIVIDEIG).

This sequence belongs to the THEP1 NTPase family.

The catalysed reaction is a ribonucleoside 5'-triphosphate + H2O = a ribonucleoside 5'-diphosphate + phosphate + H(+). Has nucleotide phosphatase activity towards ATP, GTP, CTP, TTP and UTP. May hydrolyze nucleoside diphosphates with lower efficiency. The sequence is that of Nucleoside-triphosphatase THEP1 from Thermoplasma acidophilum (strain ATCC 25905 / DSM 1728 / JCM 9062 / NBRC 15155 / AMRC-C165).